A 433-amino-acid chain; its full sequence is Probable carboxypeptidase ATEG_02905 (433 aa).

An N-terminal signal peptide occupies residues 1 to 18 (MKSAISLLLASAATYVGA). Positions 20-40 (PHPEPPQLVLSPSTSTGVHGD) are disordered. N-linked (GlcNAc...) asparagine glycosylation is present at Asn-92. A Zn(2+)-binding site is contributed by Asp-161. Catalysis depends on Glu-193, which acts as the Proton acceptor. Glu-194 lines the Zn(2+) pocket.

This sequence belongs to the peptidase M20A family. Zn(2+) is required as a cofactor.

It is found in the secreted. This chain is Probable carboxypeptidase ATEG_02905, found in Aspergillus terreus (strain NIH 2624 / FGSC A1156).